The primary structure comprises 492 residues: RNase aCSPSF2 (492 aa).

Positions 130, 132, 134, 135, 213, 234, and 460 each coordinate a divalent metal cation.

This sequence belongs to the metallo-beta-lactamase superfamily. RNA-metabolizing metallo-beta-lactamase-like family. It depends on Mg(2+) as a cofactor.

In terms of biological role, a 5'-3' exoribonuclease, more active on 5'-monophosphorylated and 5'-hydroxylated RNA than 5'-tri-phosphorylated RNA; note there is no evidence for accumulation of 5'-monophosphorylated RNA in this organism. Translation initiation factor 2 subunit gamma but not subunit alpha protects 5'-tri-phosphorylated RNA from degradation by this enzyme. In Saccharolobus solfataricus (strain ATCC 35092 / DSM 1617 / JCM 11322 / P2) (Sulfolobus solfataricus), this protein is RNase aCSPSF2.